The following is a 543-amino-acid chain: CTP synthase (543 aa).

The interval 1 to 265 (MARFIFITGG…DSEVLRAFGI (265 aa)) is amidoligase domain. Position 13 (Ser-13) interacts with CTP. Ser-13 is a UTP binding site. Residue 14 to 19 (SLGKGL) participates in ATP binding. Tyr-54 is an L-glutamine binding site. Asp-71 lines the ATP pocket. The Mg(2+) site is built by Asp-71 and Glu-139. Residues 146-148 (DIE), 186-191 (KTKPTQ), and Lys-222 contribute to the CTP site. Residues 186 to 191 (KTKPTQ) and Lys-222 contribute to the UTP site. The 252-residue stretch at 291 to 542 (TIGVVGKYVS…IEAAVKQSRL (252 aa)) folds into the Glutamine amidotransferase type-1 domain. Residue Gly-354 participates in L-glutamine binding. Cys-381 serves as the catalytic Nucleophile; for glutamine hydrolysis. L-glutamine is bound by residues 382 to 385 (LGMQ), Glu-405, and Arg-470. Active-site residues include His-515 and Glu-517.

The protein belongs to the CTP synthase family. As to quaternary structure, homotetramer.

It carries out the reaction UTP + L-glutamine + ATP + H2O = CTP + L-glutamate + ADP + phosphate + 2 H(+). It catalyses the reaction L-glutamine + H2O = L-glutamate + NH4(+). The enzyme catalyses UTP + NH4(+) + ATP = CTP + ADP + phosphate + 2 H(+). The protein operates within pyrimidine metabolism; CTP biosynthesis via de novo pathway; CTP from UDP: step 2/2. With respect to regulation, allosterically activated by GTP, when glutamine is the substrate; GTP has no effect on the reaction when ammonia is the substrate. The allosteric effector GTP functions by stabilizing the protein conformation that binds the tetrahedral intermediate(s) formed during glutamine hydrolysis. Inhibited by the product CTP, via allosteric rather than competitive inhibition. In terms of biological role, catalyzes the ATP-dependent amination of UTP to CTP with either L-glutamine or ammonia as the source of nitrogen. Regulates intracellular CTP levels through interactions with the four ribonucleotide triphosphates. This Sphingopyxis alaskensis (strain DSM 13593 / LMG 18877 / RB2256) (Sphingomonas alaskensis) protein is CTP synthase.